Here is a 69-residue protein sequence, read N- to C-terminus: UPF0435 protein SH1076 (69 aa).

Belongs to the UPF0435 family.

The protein is UPF0435 protein SH1076 of Staphylococcus haemolyticus (strain JCSC1435).